Reading from the N-terminus, the 81-residue chain is MSIFNSIVSLGSVSSSNKVSVANGSSSSSFGSNGISGAKTSAKVNATANVNAIADVNALLATATNAANTNVNVASATSLKL.

The tract at residues Gly-11–Gly-34 is disordered.

This is an uncharacterized protein from Dictyostelium discoideum (Social amoeba).